A 431-amino-acid chain; its full sequence is Ribosomal protein uS12 methylthiotransferase RimO (431 aa).

An MTTase N-terminal domain is found at 4 to 120; sequence LKLYVIVLGC…LAESINKTKK (117 aa). C13, C49, C83, C150, C154, and C157 together coordinate [4Fe-4S] cluster. Positions 136 to 365 constitute a Radical SAM core domain; sequence DSDLPYAYVK…MEVQAEISFL (230 aa). A TRAM domain is found at 368–431; it reads QRLVGKVIDV…TYDLEGELVE (64 aa).

The protein belongs to the methylthiotransferase family. RimO subfamily. The cofactor is [4Fe-4S] cluster.

It is found in the cytoplasm. It carries out the reaction L-aspartate(89)-[ribosomal protein uS12]-hydrogen + (sulfur carrier)-SH + AH2 + 2 S-adenosyl-L-methionine = 3-methylsulfanyl-L-aspartate(89)-[ribosomal protein uS12]-hydrogen + (sulfur carrier)-H + 5'-deoxyadenosine + L-methionine + A + S-adenosyl-L-homocysteine + 2 H(+). Its function is as follows. Catalyzes the methylthiolation of an aspartic acid residue of ribosomal protein uS12. In Fervidobacterium nodosum (strain ATCC 35602 / DSM 5306 / Rt17-B1), this protein is Ribosomal protein uS12 methylthiotransferase RimO.